We begin with the raw amino-acid sequence, 224 residues long: Phosphoribosylformylglycinamidine synthase subunit PurQ (224 aa).

Residues 2 to 224 (KIAVIVFPGS…SLLEEGKVKG (223 aa)) form the Glutamine amidotransferase type-1 domain. The active-site Nucleophile is the Cys86. Residues His195 and Glu197 contribute to the active site.

As to quaternary structure, part of the FGAM synthase complex composed of 1 PurL, 1 PurQ and 2 PurS subunits.

The protein resides in the cytoplasm. The catalysed reaction is N(2)-formyl-N(1)-(5-phospho-beta-D-ribosyl)glycinamide + L-glutamine + ATP + H2O = 2-formamido-N(1)-(5-O-phospho-beta-D-ribosyl)acetamidine + L-glutamate + ADP + phosphate + H(+). The enzyme catalyses L-glutamine + H2O = L-glutamate + NH4(+). Its pathway is purine metabolism; IMP biosynthesis via de novo pathway; 5-amino-1-(5-phospho-D-ribosyl)imidazole from N(2)-formyl-N(1)-(5-phospho-D-ribosyl)glycinamide: step 1/2. Functionally, part of the phosphoribosylformylglycinamidine synthase complex involved in the purines biosynthetic pathway. Catalyzes the ATP-dependent conversion of formylglycinamide ribonucleotide (FGAR) and glutamine to yield formylglycinamidine ribonucleotide (FGAM) and glutamate. The FGAM synthase complex is composed of three subunits. PurQ produces an ammonia molecule by converting glutamine to glutamate. PurL transfers the ammonia molecule to FGAR to form FGAM in an ATP-dependent manner. PurS interacts with PurQ and PurL and is thought to assist in the transfer of the ammonia molecule from PurQ to PurL. This is Phosphoribosylformylglycinamidine synthase subunit PurQ from Ligilactobacillus salivarius (strain UCC118) (Lactobacillus salivarius).